The sequence spans 358 residues: UDP-N-acetylglucosamine--N-acetylmuramyl-(pentapeptide) pyrophosphoryl-undecaprenol N-acetylglucosamine transferase (358 aa).

Residues 13 to 15 (TAG), R166, S196, and Q291 contribute to the UDP-N-acetyl-alpha-D-glucosamine site.

Belongs to the glycosyltransferase 28 family. MurG subfamily.

It is found in the cell membrane. It carries out the reaction di-trans,octa-cis-undecaprenyl diphospho-N-acetyl-alpha-D-muramoyl-L-alanyl-D-glutamyl-meso-2,6-diaminopimeloyl-D-alanyl-D-alanine + UDP-N-acetyl-alpha-D-glucosamine = di-trans,octa-cis-undecaprenyl diphospho-[N-acetyl-alpha-D-glucosaminyl-(1-&gt;4)]-N-acetyl-alpha-D-muramoyl-L-alanyl-D-glutamyl-meso-2,6-diaminopimeloyl-D-alanyl-D-alanine + UDP + H(+). Its pathway is cell wall biogenesis; peptidoglycan biosynthesis. Functionally, cell wall formation. Catalyzes the transfer of a GlcNAc subunit on undecaprenyl-pyrophosphoryl-MurNAc-pentapeptide (lipid intermediate I) to form undecaprenyl-pyrophosphoryl-MurNAc-(pentapeptide)GlcNAc (lipid intermediate II). This chain is UDP-N-acetylglucosamine--N-acetylmuramyl-(pentapeptide) pyrophosphoryl-undecaprenol N-acetylglucosamine transferase, found in Clostridium botulinum (strain Alaska E43 / Type E3).